The chain runs to 191 residues: Holliday junction branch migration complex subunit RuvA (191 aa).

Positions 1 to 64 (MIGSITGNVE…DNITQLYGFL (64 aa)) are domain I. Residues 65–142 (NRQEQDYLKM…KMPIEETFSI (78 aa)) form a domain II region. A flexible linker region spans residues 143–146 (IEND). Residues 146–191 (DDSLAALISLGYEKLKAFNVIQEIKSKTPDASTQEVIRKALQKLSQ) form a domain III region.

The protein belongs to the RuvA family. Homotetramer. Forms an RuvA(8)-RuvB(12)-Holliday junction (HJ) complex. HJ DNA is sandwiched between 2 RuvA tetramers; dsDNA enters through RuvA and exits via RuvB. An RuvB hexamer assembles on each DNA strand where it exits the tetramer. Each RuvB hexamer is contacted by two RuvA subunits (via domain III) on 2 adjacent RuvB subunits; this complex drives branch migration. In the full resolvosome a probable DNA-RuvA(4)-RuvB(12)-RuvC(2) complex forms which resolves the HJ.

It is found in the cytoplasm. In terms of biological role, the RuvA-RuvB-RuvC complex processes Holliday junction (HJ) DNA during genetic recombination and DNA repair, while the RuvA-RuvB complex plays an important role in the rescue of blocked DNA replication forks via replication fork reversal (RFR). RuvA specifically binds to HJ cruciform DNA, conferring on it an open structure. The RuvB hexamer acts as an ATP-dependent pump, pulling dsDNA into and through the RuvAB complex. HJ branch migration allows RuvC to scan DNA until it finds its consensus sequence, where it cleaves and resolves the cruciform DNA. This chain is Holliday junction branch migration complex subunit RuvA, found in Ehrlichia ruminantium (strain Welgevonden).